The sequence spans 153 residues: Fucose mutarotase (153 aa).

H24 acts as the Proton donor in catalysis. A substrate-binding site is contributed by D32. Residue D69 is part of the active site. Substrate contacts are provided by M79, Y119, Y137, and N139. The active site involves Y119.

It belongs to the RbsD / FucU family. As to quaternary structure, mainly homodimer, but also exists as homotetramer, homooctamer, and homodecamer. The homodimeric form seems catalytically inactive.

It carries out the reaction alpha-L-fucose = beta-L-fucose. It participates in carbohydrate metabolism; L-fucose metabolism. In terms of biological role, involved in the interconversion between alpha- and beta-L-fucoses. L-Fucose (6-deoxy-L-galactose) exists as alpha-L-fucose (29.5%) and beta-L-fucose (70.5%), the beta-form is metabolized through the salvage pathway. GDP-L-fucose formed either by the de novo or salvage pathways is transported into the endoplasmic reticulum, where it serves as a substrate for N- and O-glycosylations by fucosyltransferases. Fucosylated structures expressed on cell surfaces or secreted in biological fluids are believed to play a critical role in cell-cell adhesion and recognition processes. This chain is Fucose mutarotase (FUOM), found in Bos taurus (Bovine).